We begin with the raw amino-acid sequence, 320 residues long: GTP 3',8-cyclase (320 aa).

A Radical SAM core domain is found at 5 to 225; that stretch reads QFDRKINYLR…IQLIKKDEKA (221 aa). Arginine 14 is a GTP binding site. Cysteine 21 and cysteine 25 together coordinate [4Fe-4S] cluster. An S-adenosyl-L-methionine-binding site is contributed by tyrosine 27. Cysteine 28 is a [4Fe-4S] cluster binding site. Residue arginine 64 participates in GTP binding. Glycine 68 serves as a coordination point for S-adenosyl-L-methionine. Threonine 95 lines the GTP pocket. Serine 119 is an S-adenosyl-L-methionine binding site. Residue lysine 155 participates in GTP binding. Position 189 (methionine 189) interacts with S-adenosyl-L-methionine. [4Fe-4S] cluster-binding residues include cysteine 248 and cysteine 251. Residue 253-255 participates in GTP binding; it reads RIR. Position 265 (cysteine 265) interacts with [4Fe-4S] cluster.

Belongs to the radical SAM superfamily. MoaA family. Monomer and homodimer. [4Fe-4S] cluster serves as cofactor.

The catalysed reaction is GTP + AH2 + S-adenosyl-L-methionine = (8S)-3',8-cyclo-7,8-dihydroguanosine 5'-triphosphate + 5'-deoxyadenosine + L-methionine + A + H(+). It participates in cofactor biosynthesis; molybdopterin biosynthesis. In terms of biological role, catalyzes the cyclization of GTP to (8S)-3',8-cyclo-7,8-dihydroguanosine 5'-triphosphate. The polypeptide is GTP 3',8-cyclase (Campylobacter jejuni subsp. doylei (strain ATCC BAA-1458 / RM4099 / 269.97)).